The sequence spans 862 residues: Protein translocase subunit SecA (862 aa).

Residues glutamine 86, 104 to 108 (GEGKT), and aspartate 499 contribute to the ATP site. Zn(2+)-binding residues include cysteine 848, cysteine 850, cysteine 859, and histidine 860.

It belongs to the SecA family. In terms of assembly, monomer and homodimer. Part of the essential Sec protein translocation apparatus which comprises SecA, SecYEG and auxiliary proteins SecDF-YajC and YidC. Zn(2+) serves as cofactor.

Its subcellular location is the cell inner membrane. It localises to the cytoplasm. The catalysed reaction is ATP + H2O + cellular proteinSide 1 = ADP + phosphate + cellular proteinSide 2.. Functionally, part of the Sec protein translocase complex. Interacts with the SecYEG preprotein conducting channel. Has a central role in coupling the hydrolysis of ATP to the transfer of proteins into and across the cell membrane, serving both as a receptor for the preprotein-SecB complex and as an ATP-driven molecular motor driving the stepwise translocation of polypeptide chains across the membrane. In Ehrlichia canis (strain Jake), this protein is Protein translocase subunit SecA.